The following is a 565-amino-acid chain: Phosphatidylinositol 4-kinase gamma 4 (565 aa).

2 Ubiquitin-like domains span residues 32 to 104 (IVIF…LVVR) and 109 to 187 (RAIS…RPAK). The region spanning 257-542 (GYLPVMSTEG…AILPGTSEET (286 aa)) is the PI3K/PI4K catalytic domain. The G-loop stretch occupies residues 263–269 (STEGSGG). Residues 264-270 (TEGSGGV) and K286 each bind ATP. Positions 291–311 (EPMAKNNPRGLPLSTDGEGLK) are disordered. 369-372 (QLFV) provides a ligand contact to ATP. A catalytic loop region spans residues 402-410 (ANADRHAGN). An activation loop region spans residues 425-451 (PIDHGYCLPEKFEDCTFEWLYWPQARE). D427 lines the ATP pocket.

This sequence belongs to the PI3/PI4-kinase family. Type II PI4K subfamily. In terms of assembly, interacts with FTIP1 and RPN10. As to expression, specifically expressed in the phloem including companion cells.

It localises to the nucleus. Its subcellular location is the endoplasmic reticulum. The catalysed reaction is a 1,2-diacyl-sn-glycero-3-phospho-(1D-myo-inositol) + ATP = a 1,2-diacyl-sn-glycero-3-phospho-(1D-myo-inositol 4-phosphate) + ADP + H(+). In terms of biological role, the phosphorylation of phosphatidylinositol (PI) to PI4P is the first committed step in the generation of phosphatidylinositol 4,5-bisphosphate (PIP2), a precursor of the second messenger inositol 1,4,5-trisphosphate (InsP3). Involved in the control of flowering under long day conditions by promoting degradation of FTIP1. Recruits FTIP1 for degradation by the 26S proteasome in leaves, which affects RFT1 transport to the shoot apical meristem (SAM). In Oryza sativa subsp. japonica (Rice), this protein is Phosphatidylinositol 4-kinase gamma 4.